The sequence spans 125 residues: Ino eighty subunit 5 (125 aa).

A Phosphothreonine modification is found at T124.

In terms of assembly, component of the chromatin-remodeling INO80 complex, at least composed of ARP4, ARP5, ARP8, RVB1, RVB2, TAF14, NHP10, IES1, IES3, IES4, IES6, ACT1, IES2, IES5 and INO80.

It is found in the nucleus. The sequence is that of Ino eighty subunit 5 (IES5) from Saccharomyces cerevisiae (strain ATCC 204508 / S288c) (Baker's yeast).